The primary structure comprises 402 residues: DNA primase DnaG (402 aa).

One can recognise a Toprim domain in the interval 165-243; sequence PNLIIVEGRA…KIDFVARAPV (79 aa). Positions 171, 216, and 218 each coordinate Mg(2+).

The protein belongs to the archaeal DnaG primase family. In terms of assembly, forms a ternary complex with MCM helicase and DNA. Component of the archaeal exosome complex. The cofactor is Mg(2+).

The catalysed reaction is ssDNA + n NTP = ssDNA/pppN(pN)n-1 hybrid + (n-1) diphosphate.. RNA polymerase that catalyzes the synthesis of short RNA molecules used as primers for DNA polymerase during DNA replication. Also part of the exosome, which is a complex involved in RNA degradation. Acts as a poly(A)-binding protein that enhances the interaction between heteromeric, adenine-rich transcripts and the exosome. The protein is DNA primase DnaG of Saccharolobus islandicus (strain Y.N.15.51 / Yellowstone #2) (Sulfolobus islandicus).